The sequence spans 488 residues: Acetyl-coenzyme A carboxylase carboxyl transferase subunit beta, chloroplastic (488 aa).

The CoA carboxyltransferase N-terminal domain maps to leucine 227–asparagine 488. The Zn(2+) site is built by cysteine 231, cysteine 234, cysteine 247, and cysteine 250. The C4-type zinc-finger motif lies at cysteine 231 to cysteine 250.

Belongs to the AccD/PCCB family. As to quaternary structure, acetyl-CoA carboxylase is a heterohexamer composed of biotin carboxyl carrier protein, biotin carboxylase and 2 subunits each of ACCase subunit alpha and ACCase plastid-coded subunit beta (accD). Requires Zn(2+) as cofactor. As to expression, accumulates in fatty acids synthesizing tissues such as embryos, expanding leaves, flower buds, flowers, and developing siliques.

It localises to the plastid. It is found in the chloroplast membrane. The protein localises to the chloroplast stroma. The catalysed reaction is N(6)-carboxybiotinyl-L-lysyl-[protein] + acetyl-CoA = N(6)-biotinyl-L-lysyl-[protein] + malonyl-CoA. It functions in the pathway lipid metabolism; malonyl-CoA biosynthesis; malonyl-CoA from acetyl-CoA: step 1/1. Its function is as follows. Component of the acetyl coenzyme A carboxylase (ACC) complex. Biotin carboxylase (BC) catalyzes the carboxylation of biotin on its carrier protein (BCCP) and then the CO(2) group is transferred by the transcarboxylase to acetyl-CoA to form malonyl-CoA. This is Acetyl-coenzyme A carboxylase carboxyl transferase subunit beta, chloroplastic from Arabidopsis thaliana (Mouse-ear cress).